Reading from the N-terminus, the 506-residue chain is Xaa-Pro aminopeptidase 3 (506 aa).

Residues 1 to 31 (MLSLLSTPRLVPVIARLRGLSGCMSCLQRRY) constitute a mitochondrion transit peptide. The interval 54 to 79 (HPHLLRPGEVTPGLSQVEYALRRHKL) is interaction with TNFRSF1B. Substrate contacts are provided by Y300, D331, D342, H423, H430, E450, and E474. Mn(2+)-binding residues include D331, D342, and H423. 2 residues coordinate Mn(2+): E450 and E474.

Belongs to the peptidase M24B family. In terms of assembly, homodimer. Interacts with TNFRSF1B/TNFR2 (activated) and TRAF2. Mn(2+) is required as a cofactor. As to expression, expressed in the kidney, specifically in intercalated cells, but not in principal cells, of the distal convoluted tubule and cortical collecting duct (at protein level).

The protein resides in the mitochondrion. It is found in the cytoplasm. It carries out the reaction Release of any N-terminal amino acid, including proline, that is linked to proline, even from a dipeptide or tripeptide.. Its function is as follows. Catalyzes the removal of a penultimate prolyl residue from the N-termini of peptides, such as Leu-Pro-Ala. Also shows low activity towards peptides with Ala or Ser at the P1 position. Promotes TNFRSF1B-mediated phosphorylation of MAPK8/JNK1 and MAPK9/JNK2, suggesting a function as an adapter protein for TNFRSF1B; the effect is independent of XPNPEP3 peptidase activity. May inhibit apoptotic cell death induced via TNF-TNFRSF1B signaling. The sequence is that of Xaa-Pro aminopeptidase 3 (Xpnpep3) from Rattus norvegicus (Rat).